Reading from the N-terminus, the 371-residue chain is Methionine import ATP-binding protein MetN (371 aa).

Residues 1–22 form a disordered region; the sequence is MSEPFMNAPWQPPGDHPALKSP. The region spanning 27–268 is the ABC transporter domain; the sequence is ILIDSVRKLY…PRHEVTRRFV (242 aa). Position 65-72 (65-72) interacts with ATP; sequence GRSGAGKS.

It belongs to the ABC transporter superfamily. Methionine importer (TC 3.A.1.24) family. In terms of assembly, the complex is composed of two ATP-binding proteins (MetN), two transmembrane proteins (MetI) and a solute-binding protein (MetQ).

The protein localises to the cell inner membrane. It carries out the reaction L-methionine(out) + ATP + H2O = L-methionine(in) + ADP + phosphate + H(+). The enzyme catalyses D-methionine(out) + ATP + H2O = D-methionine(in) + ADP + phosphate + H(+). Its function is as follows. Part of the ABC transporter complex MetNIQ involved in methionine import. Responsible for energy coupling to the transport system. In Rhodopseudomonas palustris (strain BisB5), this protein is Methionine import ATP-binding protein MetN.